Here is a 121-residue protein sequence, read N- to C-terminus: CRISPR system Cms protein Csm2 (121 aa).

Belongs to the CRISPR-associated Csm2 family. In terms of assembly, part of the Csm effector complex that includes at least Cas10(1), Csm2(3), Csm3(5), Csm4(1), Csm5(1) and mature crRNA. The Csm complex is elongated and slightly twisted with a maximal length of 215 Angstroms and a diameter of 75-80 Angstroms. It has been modeled to have a central protein filamant of Csm3 subunits along which the dsRNA helix of paired crRNA and target RNA binds. The filament is capped at one end by Cas10 and Csm4 and at the other end by Csm5; ssDNA is thought to bind to the N-terminal HD domain of Cas10. Csm with a precursor crRNA does not include Csm5, while Cas6, the enzyme probably involved in pre-crRNA processing, is found associated with a subset of the Csm complex.

CRISPR (clustered regularly interspaced short palindromic repeat) is an adaptive immune system that provides protection against mobile genetic elements (viruses, transposable elements and conjugative plasmids). CRISPR clusters contain spacers, sequences complementary to antecedent mobile elements, and target invading nucleic acids. CRISPR clusters are transcribed and processed into CRISPR RNA (crRNA). The type III-A Csm effector complex binds crRNA and acts as a crRNA-guided RNase, DNase and cyclic oligoadenylate synthase; binding of target RNA cognate to the crRNA is required for all activities. In a heterologous host this Csm effector complex restricts ssRNA phage MS2, suggesting it may target RNA viruses in vivo. In terms of biological role, csm functions as a non-specific ssDNase. Base-pairing between crRNA and target RNA to form a ternary Csm complex activates a ssDNase activity; target RNA cleavage suppresses the ssDNase, a temporal control that prevents uncontrolled DNA degradation. Viral RNA transcripts probably tether the Csm complex to the viral genome, recruiting Cas10 ssDNA activity which is able to degrade DNA in the transcription bubble, spatially controlling the DNase activity. Its function is as follows. This subunit may be involved in monitoring complementarity of crRNA and target RNA. This Streptococcus thermophilus protein is CRISPR system Cms protein Csm2.